We begin with the raw amino-acid sequence, 370 residues long: tRNA-specific 2-thiouridylase MnmA (370 aa).

ATP is bound by residues 12–19 (GMSGGVDS) and leucine 38. Catalysis depends on cysteine 105, which acts as the Nucleophile. A disulfide bond links cysteine 105 and cysteine 204. Glycine 129 contacts ATP. The segment at 153-155 (KDQ) is interaction with tRNA. Cysteine 204 acts as the Cysteine persulfide intermediate in catalysis. Residues 310–311 (RY) are interaction with tRNA.

Belongs to the MnmA/TRMU family.

The protein localises to the cytoplasm. The enzyme catalyses S-sulfanyl-L-cysteinyl-[protein] + uridine(34) in tRNA + AH2 + ATP = 2-thiouridine(34) in tRNA + L-cysteinyl-[protein] + A + AMP + diphosphate + H(+). Functionally, catalyzes the 2-thiolation of uridine at the wobble position (U34) of tRNA, leading to the formation of s(2)U34. This chain is tRNA-specific 2-thiouridylase MnmA, found in Desulfitobacterium hafniense (strain Y51).